A 284-amino-acid chain; its full sequence is Pantothenate synthetase (284 aa).

30–37 (MGNLHDGH) provides a ligand contact to ATP. H37 acts as the Proton donor in catalysis. Position 61 (Q61) interacts with (R)-pantoate. Q61 lines the beta-alanine pocket. 149-152 (GEKD) is an ATP binding site. Q155 serves as a coordination point for (R)-pantoate. ATP contacts are provided by residues V178 and 186 to 189 (LSSR).

This sequence belongs to the pantothenate synthetase family. Homodimer.

The protein resides in the cytoplasm. It catalyses the reaction (R)-pantoate + beta-alanine + ATP = (R)-pantothenate + AMP + diphosphate + H(+). It participates in cofactor biosynthesis; (R)-pantothenate biosynthesis; (R)-pantothenate from (R)-pantoate and beta-alanine: step 1/1. Its function is as follows. Catalyzes the condensation of pantoate with beta-alanine in an ATP-dependent reaction via a pantoyl-adenylate intermediate. The chain is Pantothenate synthetase from Enterobacter sp. (strain 638).